The chain runs to 545 residues: CTP synthase (545 aa).

Residues 1 to 266 (MTTNYIFVTG…DDLVCARFGI (266 aa)) form an amidoligase domain region. A CTP-binding site is contributed by S14. A UTP-binding site is contributed by S14. Residues 15–20 (SLGKGI) and D72 contribute to the ATP site. The Mg(2+) site is built by D72 and E140. CTP is bound by residues 147–149 (DIE), 187–192 (KTKPTQ), and K223. UTP contacts are provided by residues 187-192 (KTKPTQ) and K223. 239–241 (KDV) serves as a coordination point for ATP. A Glutamine amidotransferase type-1 domain is found at 291 to 542 (TIGMVGKYTE…VKAAGQFQRG (252 aa)). Position 352 (G352) interacts with L-glutamine. The active-site Nucleophile; for glutamine hydrolysis is C379. Residues 380–383 (LGMQ), E403, and R470 contribute to the L-glutamine site. Residues H515 and E517 contribute to the active site.

This sequence belongs to the CTP synthase family. Homotetramer.

It carries out the reaction UTP + L-glutamine + ATP + H2O = CTP + L-glutamate + ADP + phosphate + 2 H(+). The catalysed reaction is L-glutamine + H2O = L-glutamate + NH4(+). It catalyses the reaction UTP + NH4(+) + ATP = CTP + ADP + phosphate + 2 H(+). Its pathway is pyrimidine metabolism; CTP biosynthesis via de novo pathway; CTP from UDP: step 2/2. With respect to regulation, allosterically activated by GTP, when glutamine is the substrate; GTP has no effect on the reaction when ammonia is the substrate. The allosteric effector GTP functions by stabilizing the protein conformation that binds the tetrahedral intermediate(s) formed during glutamine hydrolysis. Inhibited by the product CTP, via allosteric rather than competitive inhibition. In terms of biological role, catalyzes the ATP-dependent amination of UTP to CTP with either L-glutamine or ammonia as the source of nitrogen. Regulates intracellular CTP levels through interactions with the four ribonucleotide triphosphates. The polypeptide is CTP synthase (Vibrio cholerae serotype O1 (strain ATCC 39541 / Classical Ogawa 395 / O395)).